A 148-amino-acid chain; its full sequence is Succinate dehydrogenase assembly factor 3, mitochondrial (148 aa).

The N-terminal 12 residues, 1–12 (MYALRPTLRRSA), are a transit peptide targeting the mitochondrion. The tract at residues 129-148 (RGTEGDLEDGDGGESGQKSQ) is disordered.

Belongs to the complex I LYR family. SDHAF3 subfamily. Interacts with the iron-sulfur protein subunit within the SDH catalytic dimer.

Its subcellular location is the mitochondrion matrix. In terms of biological role, plays an essential role in the assembly of succinate dehydrogenase (SDH), an enzyme complex (also referred to as respiratory complex II) that is a component of both the tricarboxylic acid (TCA) cycle and the mitochondrial electron transport chain, and which couples the oxidation of succinate to fumarate with the reduction of ubiquinone (coenzyme Q) to ubiquinol. Promotes maturation of the iron-sulfur protein subunit of the SDH catalytic dimer, protecting it from the deleterious effects of oxidants. May act together with SDHAF1. In Neurospora crassa (strain ATCC 24698 / 74-OR23-1A / CBS 708.71 / DSM 1257 / FGSC 987), this protein is Succinate dehydrogenase assembly factor 3, mitochondrial.